A 319-amino-acid polypeptide reads, in one-letter code: L-lactate dehydrogenase (319 aa).

NAD(+) contacts are provided by residues valine 11, aspartate 32, arginine 37, tyrosine 62, and 76–77 (GV). Residues glutamine 79, arginine 85, and 117–120 (NPVD) contribute to the substrate site. Residues 115 to 117 (VTN) and serine 140 contribute to the NAD(+) site. 145–148 (DTAR) lines the substrate pocket. Beta-D-fructose 1,6-bisphosphate contacts are provided by arginine 150 and histidine 165. The Proton acceptor role is filled by histidine 172. Residue tyrosine 217 is modified to Phosphotyrosine. Threonine 226 contacts substrate.

This sequence belongs to the LDH/MDH superfamily. LDH family. In terms of assembly, homotetramer.

The protein localises to the cytoplasm. The catalysed reaction is (S)-lactate + NAD(+) = pyruvate + NADH + H(+). It functions in the pathway fermentation; pyruvate fermentation to lactate; (S)-lactate from pyruvate: step 1/1. Its activity is regulated as follows. Allosterically activated by fructose 1,6-bisphosphate (FBP). In terms of biological role, catalyzes the conversion of lactate to pyruvate. This chain is L-lactate dehydrogenase, found in Thermotoga sp. (strain RQ2).